The sequence spans 419 residues: Tryptophan synthase beta chain (419 aa).

Lysine 86 carries the post-translational modification N6-(pyridoxal phosphate)lysine. The segment covering valine 394–lysine 403 has biased composition (basic and acidic residues). Positions valine 394 to glutamate 419 are disordered. Residues alanine 404 to glutamate 419 show a composition bias toward polar residues.

It belongs to the TrpB family. In terms of assembly, tetramer of two alpha and two beta chains. The cofactor is pyridoxal 5'-phosphate.

The enzyme catalyses (1S,2R)-1-C-(indol-3-yl)glycerol 3-phosphate + L-serine = D-glyceraldehyde 3-phosphate + L-tryptophan + H2O. It functions in the pathway amino-acid biosynthesis; L-tryptophan biosynthesis; L-tryptophan from chorismate: step 5/5. In terms of biological role, the beta subunit is responsible for the synthesis of L-tryptophan from indole and L-serine. In Shewanella halifaxensis (strain HAW-EB4), this protein is Tryptophan synthase beta chain.